Reading from the N-terminus, the 708-residue chain is Kelch-like protein 11 (708 aa).

An N-terminal signal peptide occupies residues 1-15 (MAAAAVAAAAAAAAA). The tract at residues 47 to 70 (DFGPGPGISAMEASGGDPGPEAED) is disordered. Residues 94 to 170 (CDITLCFGGA…MYTGRIRVST (77 aa)) form the BTB domain. Residues 205–307 (CVAIHSLAHM…KPTYLTRHVK (103 aa)) enclose the BACK domain. 5 Kelch repeats span residues 360–407 (VIMV…VTES), 408–453 (YVYV…EVKG), 455–501 (LYSI…AIED), 503–556 (FVYI…VVNS), and 610–661 (DVFI…HVRI). Ser465 is modified (phosphoserine).

Component of a cullin-RING-based BCR (BTB-CUL3-RBX1) E3 ubiquitin-protein ligase complex. Homodimer. Interacts with CUL3.

In terms of biological role, component of a cullin-RING-based BCR (BTB-CUL3-RBX1) E3 ubiquitin-protein ligase complex that mediates the ubiquitination of target proteins, leading most often to their proteasomal degradation. This Homo sapiens (Human) protein is Kelch-like protein 11 (KLHL11).